The chain runs to 527 residues: Cytochrome P450 monooxyhenase eriA (527 aa).

Residues 17 to 37 (LGVVDLSLLGVGAVIAFAWLF) traverse the membrane as a helical segment. Residues Asn77, Asn274, and Asn297 are each glycosylated (N-linked (GlcNAc...) asparagine). Cys453 contributes to the heme binding site.

Belongs to the cytochrome P450 family. It depends on heme as a cofactor.

It is found in the membrane. It catalyses the reaction cyathadiol + reduced [NADPH--hemoprotein reductase] + O2 = cyathatriol + oxidized [NADPH--hemoprotein reductase] + H2O + H(+). Its pathway is secondary metabolite biosynthesis. Cytochrome P450 monooxygenase; part of the gene cluster that mediates the biosynthesis of erinacines, cyathane-xylosides that show unique biological activities, including leishmanicidal activity, stimulating activity for nerve growth-factor synthesis, and agonistic activity toward the kappa opioid receptor. Within the pathway, eriA catalyzes C-11 hydroxylation in the presence of the short chain dehydrogenase/reductase (SDR) eriH, which leads to the production of cyathatriol. The first step of the erinacines biosynthesis pathway is catalyzed by the geranylgeranyl diphosphate (GGPP) synthase eriE via conversion of farnesyl pyrophosphate and isopentyl pyrophosphate into geranylgeranyl pyrophosphate (GGPP). GGPP is then substrate of the diterpene cyclase eriG for the production of cyatha-3,12-diene. The cytochrome P450 monooxygenase eriI then hydroxylates cyatha-3,12-diene at C-14 of the seven-membered ring to produce erinacol, which is further hydroxylated at C-15 by the cytochrome P450 monooxygenase eriC to yield cyathadiol. The cytochrome P450 monooxygenase eriA then catalyzes C-11 hydroxylation in the presence of the short chain dehydrogenase/reductase (SDR) eriH, which leads to the production of cyathatriol. The acetyltransferase eriL converts cyathatriol into 11-O-acetyl-cyathatriol. The SDR eriH catalyzes further oxidation of 11-O-acetyl-cyathatriol into 1-O-acetylcyathin A3. Finally, the glycosyl transferase eriJ tranfers xylose from UDP-xylose onto C-14 of 11-O-acetyl-cyathatriol to form eracine Q. EriJ is also able to convert 11-O-acetyl-cyathatriol to eracine Q2 by using UDP-D-glucose as cosubstrate, but at a lower rate. The polypeptide is Cytochrome P450 monooxyhenase eriA (Hericium erinaceus (Lion's mane mushroom)).